Here is a 328-residue protein sequence, read N- to C-terminus: Naphthalene 1,2-dioxygenase/salicylate 5-hydroxylase systems, ferredoxin--NAD(P)(+), reductase component (328 aa).

Positions Met1–Asp89 constitute a 2Fe-2S ferredoxin-type domain. [2Fe-2S] cluster contacts are provided by Cys35, Cys40, Cys43, and Cys73. Positions Ala96–Arg193 constitute an FAD-binding FR-type domain.

The protein belongs to the bacterial ring-hydroxylating dioxygenase ferredoxin reductase family. In terms of assembly, ferredoxin reductase NagAa belongs to both the salicylate 5-hydroxylase (S5H) and the naphthalene 1,2-dioxygenase (NDO) multicomponent enzyme systems. The NDO multicomponent enzyme system is composed of an electron transfer component and a dioxygenase component (iron sulfur protein (ISP)). The electron transfer component is composed of a ferredoxin reductase (NagAa) and a ferredoxin (NagAb), and the dioxygenase component is formed by a large alpha subunit (NagAc) and a small beta subunit (NagAd). The S5H multicomponent enzyme system is composed of an electron transfer component and a monooxygenase component. The electron transfer component is comprised of a ferredoxin reductase (NagAa) and a ferredoxin (NagAb), and the monooxygenase component is formed by a large subunit (NagG) and a small subunit (NagH). Requires [2Fe-2S] cluster as cofactor. FAD is required as a cofactor.

The enzyme catalyses 2 reduced [2Fe-2S]-[ferredoxin] + NAD(+) + H(+) = 2 oxidized [2Fe-2S]-[ferredoxin] + NADH. It carries out the reaction 2 reduced [2Fe-2S]-[ferredoxin] + NADP(+) + H(+) = 2 oxidized [2Fe-2S]-[ferredoxin] + NADPH. Its pathway is aromatic compound metabolism; naphthalene degradation. Its function is as follows. Component of two multicomponent enzyme systems which are involved in the catabolism of naphthalene. Plays a role as an electron transfer component for both salicylate 5-hydroxylase (S5H) and naphthalene 1,2-dioxygenase (NDO) systems, by transferring electrons from NAD(P)H to the oxygenase component via the ferredoxin NagAb. The electron transport chain from the two systems can use both NADH and NADPH as electron donors at approximately similar rates. The protein is Naphthalene 1,2-dioxygenase/salicylate 5-hydroxylase systems, ferredoxin--NAD(P)(+), reductase component of Ralstonia sp.